The primary structure comprises 55 residues: UPF0391 membrane protein NE1120 (55 aa).

The next 2 helical transmembrane spans lie at 4–24 (MALV…AGIA) and 27–47 (LAWA…VFYL).

It belongs to the UPF0391 family.

It is found in the cell membrane. The sequence is that of UPF0391 membrane protein NE1120 from Nitrosomonas europaea (strain ATCC 19718 / CIP 103999 / KCTC 2705 / NBRC 14298).